A 341-amino-acid chain; its full sequence is Heme A synthase (341 aa).

8 consecutive transmembrane segments (helical) span residues 8–28 (VIIW…VGGI), 92–112 (FHRF…VYFL), 126–146 (IVLL…VRSG), 160–180 (LHLT…LDLI), 201–221 (AALL…AGLI), 256–276 (VQFV…FLFF), 294–314 (LVVF…YSVP), and 315–335 (LALG…MTYT). His-260 contributes to the heme binding site. His-321 contributes to the heme binding site.

The protein belongs to the COX15/CtaA family. Type 2 subfamily. As to quaternary structure, interacts with CtaB. The cofactor is heme b.

The protein localises to the cell membrane. The catalysed reaction is Fe(II)-heme o + 2 A + H2O = Fe(II)-heme a + 2 AH2. Its pathway is porphyrin-containing compound metabolism; heme A biosynthesis; heme A from heme O: step 1/1. Catalyzes the conversion of heme O to heme A by two successive hydroxylations of the methyl group at C8. The first hydroxylation forms heme I, the second hydroxylation results in an unstable dihydroxymethyl group, which spontaneously dehydrates, resulting in the formyl group of heme A. The sequence is that of Heme A synthase from Flavobacterium johnsoniae (strain ATCC 17061 / DSM 2064 / JCM 8514 / BCRC 14874 / CCUG 350202 / NBRC 14942 / NCIMB 11054 / UW101) (Cytophaga johnsonae).